The chain runs to 149 residues: Large ribosomal subunit protein bL9 (149 aa).

Position 89 is an N6-acetyllysine (lysine 89).

It belongs to the bacterial ribosomal protein bL9 family.

Binds to the 23S rRNA. In Shigella dysenteriae serotype 1 (strain Sd197), this protein is Large ribosomal subunit protein bL9.